Consider the following 211-residue polypeptide: SOSS complex subunit B1 (211 aa).

Residues 22 to 92 constitute a DNA-binding region (OB); it reads IVLETGRVTK…TLYTGRGGDL (71 aa). Residues 110–211 form a disordered region; the sequence is EPNPEYSAQQ…GKETRRSSKR (102 aa). The span at 115-128 shows a compositional bias: polar residues; the sequence is YSAQQAPNKTVQND. Pro residues-rich tracts occupy residues 133–143 and 165–174; these read APQPPTGPPAT and PHPPHTPSHP.

The protein belongs to the SOSS-B family. SOSS-B1 subfamily. As to quaternary structure, component of the SOSS complex, composed of SOSS-B (SOSS-B1/NABP2 or SOSS-B2/NABP1), SOSS-A/INTS3 and SOSS-C/INIP. SOSS complexes containing SOSS-B1/NABP2 are more abundant than complexes containing SOSS-B2/NABP1. Directly interacts with ATM, SOSS-A/INTS3 and RAD51. Interacts with INTS7. In terms of processing, phosphorylated by ATM in response to DNA damage. Phosphorylation prevents degradation by the proteasome, hence stabilization of the protein and accumulation within cells. Post-translationally, ubiquitinated in a FBXL5-dependent manner, leading to proteasomal degradation.

The protein localises to the nucleus. Its function is as follows. Component of the SOSS complex, a multiprotein complex that functions downstream of the MRN complex to promote DNA repair and G2/M checkpoint. In the SOSS complex, acts as a sensor of single-stranded DNA that binds to single-stranded DNA, in particular to polypyrimidines. The SOSS complex associates with DNA lesions and influences diverse endpoints in the cellular DNA damage response including cell-cycle checkpoint activation, recombinational repair and maintenance of genomic stability. Required for efficient homologous recombination-dependent repair of double-strand breaks (DSBs) and ATM-dependent signaling pathways. The protein is SOSS complex subunit B1 (NABP2) of Bos taurus (Bovine).